The chain runs to 181 residues: Protein Syd (181 aa).

This sequence belongs to the Syd family.

It localises to the cell inner membrane. In terms of biological role, interacts with the SecY protein in vivo. May bind preferentially to an uncomplexed state of SecY, thus functioning either as a chelating agent for excess SecY in the cell or as a regulatory factor that negatively controls the translocase function. The sequence is that of Protein Syd from Escherichia coli (strain K12 / DH10B).